A 737-amino-acid chain; its full sequence is Procollagen-lysine,2-oxoglutarate 5-dioxygenase 2 (737 aa).

An N-terminal signal peptide occupies residues 1–25 (MGDRGARPGRLMPMLALLSWAAGLG). N-linked (GlcNAc...) asparagine glycosylation is found at Asn63 and Asn209. Phosphothreonine is present on Thr320. Tyr323 carries the post-translational modification Phosphotyrosine. N-linked (GlcNAc...) asparagine glycosylation is found at Asn365 and Asn522. A Fe2OG dioxygenase domain is found at 644–737 (KGFALLNFVV…RYIAVSFIDP (94 aa)). Residues His666 and Asp668 each coordinate Fe cation. N-linked (GlcNAc...) asparagine glycosylation occurs at Asn696. Position 704 is an N6-succinyllysine (Lys704). His718 contacts Fe cation. N-linked (GlcNAc...) asparagine glycosylation is present at Asn725. Arg728 is an active-site residue.

As to quaternary structure, homodimer. The cofactor is Fe(2+). L-ascorbate serves as cofactor. As to expression, is highly expressed in the heart, lung, kidney, eye, ovary and placenta.

The protein localises to the rough endoplasmic reticulum membrane. The enzyme catalyses L-lysyl-[collagen] + 2-oxoglutarate + O2 = (5R)-5-hydroxy-L-lysyl-[collagen] + succinate + CO2. Forms hydroxylysine residues in -Xaa-Lys-Gly- sequences in collagens. These hydroxylysines serve as sites of attachment for carbohydrate units and are essential for the stability of the intermolecular collagen cross-links. This Mus musculus (Mouse) protein is Procollagen-lysine,2-oxoglutarate 5-dioxygenase 2 (Plod2).